A 328-amino-acid polypeptide reads, in one-letter code: Nucleotide-binding protein BLD_0430 (328 aa).

Residues 1–35 (MNQQTTNRDTGEAAATNAPANSATSTSTPDNQPTP) form a disordered region. Residues 13-29 (AAATNAPANSATSTSTP) are compositionally biased toward low complexity. 46–53 (GMSGAGRS) lines the ATP pocket. GTP is bound at residue 101–104 (DVRS).

This sequence belongs to the RapZ-like family.

Displays ATPase and GTPase activities. The sequence is that of Nucleotide-binding protein BLD_0430 from Bifidobacterium longum (strain DJO10A).